Reading from the N-terminus, the 311-residue chain is Cytosolic Fe-S cluster assembly factor Nubp1 homolog (311 aa).

The tract at residues 1 to 21 is disordered; sequence MQAPPPEHCPGVESEEAGKGS. [4Fe-4S] cluster-binding residues include cysteine 9, cysteine 23, cysteine 26, and cysteine 32. 63–70 is an ATP binding site; it reads GKGGVGKS. The [4Fe-4S] cluster site is built by cysteine 240 and cysteine 243.

It belongs to the Mrp/NBP35 ATP-binding proteins family. NUBP1/NBP35 subfamily. As to quaternary structure, heterotetramer of 2 Nubp1 and 2 Nubp2 chains. The cofactor is [4Fe-4S] cluster.

It is found in the cytoplasm. In terms of biological role, component of the cytosolic iron-sulfur (Fe/S) protein assembly (CIA) machinery. Required for maturation of extramitochondrial Fe-S proteins. The Nubp1-Nubp2 heterotetramer forms a Fe-S scaffold complex, mediating the de novo assembly of an Fe-S cluster and its transfer to target apoproteins. This Drosophila melanogaster (Fruit fly) protein is Cytosolic Fe-S cluster assembly factor Nubp1 homolog.